Here is a 387-residue protein sequence, read N- to C-terminus: Protein RecA (387 aa).

Gly80 to Thr87 is an ATP binding site. The interval Leu348 to Asp387 is disordered. Composition is skewed to acidic residues over residues Asp349–Thr360 and Thr378–Asp387.

Belongs to the RecA family.

The protein localises to the cytoplasm. Can catalyze the hydrolysis of ATP in the presence of single-stranded DNA, the ATP-dependent uptake of single-stranded DNA by duplex DNA, and the ATP-dependent hybridization of homologous single-stranded DNAs. It interacts with LexA causing its activation and leading to its autocatalytic cleavage. In Lactococcus lactis subsp. cremoris (strain MG1363), this protein is Protein RecA.